Reading from the N-terminus, the 261-residue chain is Guanine nucleotide exchange factor BopE (261 aa).

The segment covering 241–253 (RRAAQDASRDEKG) has biased composition (basic and acidic residues). The segment at 241-261 (RRAAQDASRDEKGAANAADGA) is disordered.

This sequence belongs to the GEF (guanine exchange factor) SopE family. As to quaternary structure, monomer. Interacts with human CDC42.

The protein resides in the secreted. In terms of biological role, activator for both CDC42 and RAC1 by directly interacting with these Rho GTPases and acting as a guanine nucleotide exchange factor (GEF). This activation results in actin cytoskeleton rearrangements and stimulates membrane ruffling, thus promoting bacterial entry into non-phagocytic cells. This chain is Guanine nucleotide exchange factor BopE (bopE), found in Burkholderia thailandensis (strain ATCC 700388 / DSM 13276 / CCUG 48851 / CIP 106301 / E264).